We begin with the raw amino-acid sequence, 155 residues long: FUN14 domain-containing protein 1 (155 aa).

The Cytoplasmic portion of the chain corresponds to 1 to 47; that stretch reads MATRNPPPQDYESDDDSYEVLDLTEYARRHQWWNRVFGHSSGPMVEK. Ser-13 is subject to Phosphoserine; by CK2. A Phosphoserine; by ULK1 modification is found at Ser-17. Tyr-18 is modified (phosphotyrosine; by SRC). Positions 18–21 match the YXXL motif; that stretch reads YEVL. The chain crosses the membrane as a helical span at residues 48–68; it reads YSVATQIVMGGVTGWCAGFLF. The Mitochondrial intermembrane portion of the chain corresponds to 69–74; it reads QKVGKL. Residues 75 to 95 traverse the membrane as a helical segment; it reads AATAVGGGFLLLQIASHSGYV. Residues 96–133 are Cytoplasmic-facing; it reads QIDWKRVEKDVNKAKRQIKKRANKAAPEINNLIEEATE. A Glycyl lysine isopeptide (Lys-Gly) (interchain with G-Cter in ubiquitin) cross-link involves residue Lys-119. A helical membrane pass occupies residues 134-154; it reads FIKQNIVISSGFVGGFLLGLA. Residue Ser-155 is a topological domain, mitochondrial intermembrane.

The protein belongs to the FUN14 family. As to quaternary structure, interacts (via YXXL motif) with MAP1 LC3 family proteins MAP1LC3A, MAP1LC3B and GABARAP. Interacts with DNM1L/DPR1. Interacts with GPX4. Phosphorylation at Ser-13 by CK2 and at Tyr-18 by SRC inhibits activation of mitophagy. Following hypoxia, dephosphorylated at Tyr-18, leading to interaction with MAP1 LC3 family proteins and triggering mitophagy. Dephosphorylation is mediated by PGAM5. Phosphorylated by ULK1 at Ser-17 which enhances FUNDC1 binding to LC3. In terms of processing, ubiquitinated on Lys-119. Deubiquitinated by USP19; leading to hypoxia-induced DRP1 oligomerization and GTPase activity. As to expression, widely expressed.

It is found in the mitochondrion outer membrane. Integral mitochondrial outer-membrane protein that mediates the formation of mitochondria-associated endoplasmic reticulum membranes (MAMs). In turn, mediates angiogenesis and neoangiogenesis through interference with intracellular Ca(2+) communication and regulation of the vascular endothelial growth factor receptor KDR/VEGFR2 expression at both mRNA and protein levels. Also acts as an activator of hypoxia-induced mitophagy, an important mechanism for mitochondrial quality and homeostasis, by interacting with and recruiting LC3 protein family to mitochondria. Mechanistically, recruits DRP1 at ER-mitochondria contact sites leading to DRP1 oligomerization and GTPase activity to facilitate mitochondrial fission during hypoxia. Additionally, plays a role in hepatic ferroptosis by interacting directly with glutathione peroxidase/GPX4 to facilitate its recruitment into mitochondria through TOM/TIM complex where it is degraded by mitophagy. The sequence is that of FUN14 domain-containing protein 1 (FUNDC1) from Homo sapiens (Human).